A 275-amino-acid chain; its full sequence is MEEKNIHMQPNINYSYRNPNMYNMNYHNPIVPPPQQQMQLFVNDWKSILSPMQTCKIKQQFDDREFVADYFMGFKLDFNNKYLILDASTELMKFTACEKSEFCYRNCLPKICIPMNMKILSYGKEISKPDILMEKDCTCTFLCFNRPTIKMYDFSNNNNKELIGTIKTPYRCCSYNFNLFDPSNNKIMYMDDTCCQMSILCPCPWGPFKYSNFFLRDANSKEKIAHLRKEVPFLKFVKRDIDNYTLDFEQVQNPEWKMMLLAFALFLDYMYYDRK.

The helical transmembrane segment at 256 to 272 (WKMMLLAFALFLDYMYY) threads the bilayer.

This sequence belongs to the phospholipid scramblase family. As to quaternary structure, forms homooligomers in the presence of calcium. The cofactor is Ca(2+). Requires Mg(2+) as cofactor.

It localises to the membrane. Its subcellular location is the cell membrane. It catalyses the reaction a 1,2-diacyl-sn-glycero-3-phosphoethanolamine(in) = a 1,2-diacyl-sn-glycero-3-phosphoethanolamine(out). In terms of biological role, catalyzes calcium-induced ATP-independent rapid bidirectional and non-specific movement of phospholipids (lipid scrambling or lipid flip-flop) between the inner and outer leaflet of the plasma membrane resulting in collapse of the phospholipid asymmetry. Preferentially, mediates calcium-dependent phosphatidylethanolamine externalization. During the liver stage, plays a role in the interaction with, and thus invasion of, host hepatocytes. Dispensable for host erythrocyte invasion and asexual parasite development. The polypeptide is Phospholipid scramblase (Plasmodium falciparum (isolate 3D7)).